The following is a 114-amino-acid chain: Large ribosomal subunit protein uL22c (114 aa).

It belongs to the universal ribosomal protein uL22 family. In terms of assembly, part of the 50S ribosomal subunit.

The protein resides in the plastid. It localises to the cyanelle. Functionally, this protein binds specifically to 23S rRNA. In terms of biological role, the globular domain of the protein is located near the polypeptide exit tunnel on the outside of the subunit, while an extended beta-hairpin is found that lines the wall of the exit tunnel in the center of the 70S ribosome. This Cyanophora paradoxa protein is Large ribosomal subunit protein uL22c (rpl22).